The chain runs to 215 residues: Probable transaldolase (215 aa).

K83 serves as the catalytic Schiff-base intermediate with substrate.

Belongs to the transaldolase family. Type 3B subfamily.

Its subcellular location is the cytoplasm. The enzyme catalyses D-sedoheptulose 7-phosphate + D-glyceraldehyde 3-phosphate = D-erythrose 4-phosphate + beta-D-fructose 6-phosphate. Its pathway is carbohydrate degradation; pentose phosphate pathway; D-glyceraldehyde 3-phosphate and beta-D-fructose 6-phosphate from D-ribose 5-phosphate and D-xylulose 5-phosphate (non-oxidative stage): step 2/3. In terms of biological role, transaldolase is important for the balance of metabolites in the pentose-phosphate pathway. The sequence is that of Probable transaldolase from Pelotomaculum thermopropionicum (strain DSM 13744 / JCM 10971 / SI).